Here is a 136-residue protein sequence, read N- to C-terminus: Large ribosomal subunit protein bL17 (136 aa).

This sequence belongs to the bacterial ribosomal protein bL17 family. Part of the 50S ribosomal subunit. Contacts protein L32.

This is Large ribosomal subunit protein bL17 from Rickettsia canadensis (strain McKiel).